Reading from the N-terminus, the 588-residue chain is L-fucose isomerase (588 aa).

Catalysis depends on proton acceptor residues glutamate 335 and aspartate 359. Positions 335, 359, and 525 each coordinate Mn(2+).

Belongs to the L-fucose isomerase family. It depends on Mn(2+) as a cofactor.

The protein resides in the cytoplasm. The catalysed reaction is L-fucose = L-fuculose. It participates in carbohydrate degradation; L-fucose degradation; L-lactaldehyde and glycerone phosphate from L-fucose: step 1/3. Converts the aldose L-fucose into the corresponding ketose L-fuculose. The polypeptide is L-fucose isomerase (Streptococcus pneumoniae (strain 70585)).